A 98-amino-acid chain; its full sequence is NADH-ubiquinone oxidoreductase chain 4L (98 aa).

3 helical membrane-spanning segments follow: residues 1–21 (MSMV…GLLM), 29–49 (SLLC…VAIL), and 61–81 (IILL…LVMV).

Belongs to the complex I subunit 4L family. In terms of assembly, core subunit of respiratory chain NADH dehydrogenase (Complex I) which is composed of 45 different subunits.

The protein resides in the mitochondrion inner membrane. It carries out the reaction a ubiquinone + NADH + 5 H(+)(in) = a ubiquinol + NAD(+) + 4 H(+)(out). Core subunit of the mitochondrial membrane respiratory chain NADH dehydrogenase (Complex I) which catalyzes electron transfer from NADH through the respiratory chain, using ubiquinone as an electron acceptor. Part of the enzyme membrane arm which is embedded in the lipid bilayer and involved in proton translocation. The polypeptide is NADH-ubiquinone oxidoreductase chain 4L (MT-ND4L) (Puma concolor (Mountain lion)).